An 873-amino-acid chain; its full sequence is MIRHALLIFSILVSTPIVGEGATSTYEPTDVFLFNCGDTSNNVDVSGRNWTAENQKILSSNLVNASFTAQASYQESGVSQIPYMTARIFRSEFTYSFPVTPGSNFLRLYFYPTRYGSQFNAVKSFFSVKVNGFTLLNNFSADLTVKASKPQTEFIIKEFIIPVYQTLNLTFTPSLDSLAFVNGIEIVSIPNRFYSKGGFDDVITNVGSSVDFHIENSTAFETVYRLNVGGKTVGDSGMFRRWVSDDEIILSESSGISPIVPDIKINYTEKTPSYVAPDDVYATSRSMGNADHPEQNLNFNLTWLFTVDAGFSYLVRLHFCETLSEVNKEGQRVFSIFIENQTATLEMDVFRMSGGSWIPMYLDYTVIAGSGSGRRHDLRLDLHPLVSINPKYYDAILNGVEILKMNDPDGNLAGPNPDPLVSPDLIPNRATPRIRKNKSHILPITLAVVGSLVVLAMFVVGVLVIMKKKKKSKPSTNSSWCPLPHGTDSTNTKPAKSLPADLCRRFSIFEIKSATNDFEDKLIIGVGGFGSVYKGQIDGGATLVAVKRLEITSNQGAKEFETELEMLSKLRHVHLVSLIGYCDEDNEMVLVYEYMPHGTLKDHLFRRDKTSDPPLSWKRRLEICIGAARGLQYLHTGAKYTIIHRDIKTTNILLDENFVTKVSDFGLSRVGPTSASQTHVSTVVKGTFGYLDPEYYRRQVLTEKSDVYSFGVVLLEVLCCRPIRMQSVPPEQADLIRWVKSNYRRGTVDQIIDSDLSADITSTSLEKFCEIAVRCVQDRGMERPPMNDVVWALEFALQLHETAKKKNDNVESLDLMPSGEVGTTTDGEDDLFSRTTGHVGKSTTTDDSVLVVGDERSGSSWGVFSEINEPKAR.

The signal sequence occupies residues 1-21 (MIRHALLIFSILVSTPIVGEG). Residues 22–445 (ATSTYEPTDV…KNKSHILPIT (424 aa)) lie on the Extracellular side of the membrane. N-linked (GlcNAc...) asparagine glycosylation is found at Asn-49, Asn-64, Asn-138, Asn-168, Asn-216, Asn-266, Asn-300, Asn-340, and Asn-437. The helical transmembrane segment at 446-466 (LAVVGSLVVLAMFVVGVLVIM) threads the bilayer. The Cytoplasmic segment spans residues 467–873 (KKKKKSKPST…FSEINEPKAR (407 aa)). The tract at residues 472 to 494 (SKPSTNSSWCPLPHGTDSTNTKP) is disordered. The Protein kinase domain occupies 518–803 (FEDKLIIGVG…EFALQLHETA (286 aa)). ATP is bound by residues 524–532 (IGVGGFGSV) and Lys-547. Asp-646 serves as the catalytic Proton acceptor. A disordered region spans residues 813–843 (LDLMPSGEVGTTTDGEDDLFSRTTGHVGKST). Over residues 833–843 (SRTTGHVGKST) the composition is skewed to polar residues.

This sequence belongs to the protein kinase superfamily. Ser/Thr protein kinase family.

Its subcellular location is the membrane. In Arabidopsis thaliana (Mouse-ear cress), this protein is Putative receptor-like protein kinase At5g39000.